The following is a 342-amino-acid chain: Holliday junction branch migration complex subunit RuvB (342 aa).

The segment at 1-179 (MTNILSPEKS…FGIPMRLNFY (179 aa)) is large ATPase domain (RuvB-L). ATP contacts are provided by residues isoleucine 18, arginine 19, glycine 60, lysine 63, threonine 64, threonine 65, 126–128 (EDF), arginine 169, tyrosine 179, and arginine 216. Threonine 64 provides a ligand contact to Mg(2+). A small ATPAse domain (RuvB-S) region spans residues 180–250 (NTEELKKVLN…ISDFGLKRLE (71 aa)). A head domain (RuvB-H) region spans residues 253–342 (RIGLDSNDYR…HQFNIFNENE (90 aa)). DNA contacts are provided by arginine 289, arginine 308, and arginine 313.

It belongs to the RuvB family. As to quaternary structure, homohexamer. Forms an RuvA(8)-RuvB(12)-Holliday junction (HJ) complex. HJ DNA is sandwiched between 2 RuvA tetramers; dsDNA enters through RuvA and exits via RuvB. An RuvB hexamer assembles on each DNA strand where it exits the tetramer. Each RuvB hexamer is contacted by two RuvA subunits (via domain III) on 2 adjacent RuvB subunits; this complex drives branch migration. In the full resolvosome a probable DNA-RuvA(4)-RuvB(12)-RuvC(2) complex forms which resolves the HJ.

Its subcellular location is the cytoplasm. The catalysed reaction is ATP + H2O = ADP + phosphate + H(+). Its function is as follows. The RuvA-RuvB-RuvC complex processes Holliday junction (HJ) DNA during genetic recombination and DNA repair, while the RuvA-RuvB complex plays an important role in the rescue of blocked DNA replication forks via replication fork reversal (RFR). RuvA specifically binds to HJ cruciform DNA, conferring on it an open structure. The RuvB hexamer acts as an ATP-dependent pump, pulling dsDNA into and through the RuvAB complex. RuvB forms 2 homohexamers on either side of HJ DNA bound by 1 or 2 RuvA tetramers; 4 subunits per hexamer contact DNA at a time. Coordinated motions by a converter formed by DNA-disengaged RuvB subunits stimulates ATP hydrolysis and nucleotide exchange. Immobilization of the converter enables RuvB to convert the ATP-contained energy into a lever motion, pulling 2 nucleotides of DNA out of the RuvA tetramer per ATP hydrolyzed, thus driving DNA branch migration. The RuvB motors rotate together with the DNA substrate, which together with the progressing nucleotide cycle form the mechanistic basis for DNA recombination by continuous HJ branch migration. Branch migration allows RuvC to scan DNA until it finds its consensus sequence, where it cleaves and resolves cruciform DNA. The sequence is that of Holliday junction branch migration complex subunit RuvB from Rickettsia peacockii (strain Rustic).